We begin with the raw amino-acid sequence, 123 residues long: Small ribosomal subunit protein uS12c (123 aa).

The interval 9-31 (RNKRQAAENKTKSPALQRSPQRR) is disordered.

Belongs to the universal ribosomal protein uS12 family. Part of the 30S ribosomal subunit.

It localises to the plastid. The protein localises to the chloroplast. Functionally, with S4 and S5 plays an important role in translational accuracy. Located at the interface of the 30S and 50S subunits. This chain is Small ribosomal subunit protein uS12c (rps12), found in Spirogyra maxima (Green alga).